The following is a 790-amino-acid chain: E3 ubiquitin-protein ligase Jade-2 (790 aa).

Disordered regions lie at residues 1–52 and 111–130; these read MEEK…PSEV and GPPA…SQPD. Serine 9 and serine 15 each carry phosphoserine. Positions 9-28 are enriched in low complexity; that stretch reads SISSDNSDTTDSHATSTSAS. N6-acetyllysine occurs at positions 32 and 38. At serine 117 the chain carries Phosphoserine. The PHD-type 1 zinc finger occupies 199–249; it reads DVVCDVCRSPEGEDGNEMVFCDKCNVCVHQACYGILKVPTGSWLCRTCALG. The C2HC pre-PHD-type zinc-finger motif lies at 251 to 285; it reads QPKCLLCPKRGGALKPTRSGTKWVHVSCALWIPEV. Position 298 is an N6-acetyllysine (lysine 298). A PHD-type 2 zinc finger spans residues 309 to 365; that stretch reads LSCSLCKECTGTCIQCSMPSCVTAFHVTCAFDHGLEMRTILADNDEVKFKSFCQEHS. Disordered regions lie at residues 361–386 and 578–777; these read CQEH…AGED and SFMR…PREA. Residues 372–381 are compositionally biased toward polar residues; the sequence is EPTSEPTEPS. Basic residues predominate over residues 593–606; it reads KARGRTRLPAKKKP. Residues 684-693 show a composition bias toward low complexity; that stretch reads AASVAADSDV. Residues 737-747 are compositionally biased toward basic and acidic residues; that stretch reads ERPKVSLHFDT. The span at 757-767 shows a compositional bias: acidic residues; the sequence is EMSDSDVEAED.

The protein belongs to the JADE family. Component of the HBO1 complex composed at least of ING4 or ING5, MYST2/HBO1, MEAF6, and one of JADE1, JADE2 and JADE3. Interacts (via C-terminus) with KDM1A (via AOD/Tower domain).

It catalyses the reaction S-ubiquitinyl-[E2 ubiquitin-conjugating enzyme]-L-cysteine + [acceptor protein]-L-lysine = [E2 ubiquitin-conjugating enzyme]-L-cysteine + N(6)-ubiquitinyl-[acceptor protein]-L-lysine.. It functions in the pathway protein modification; protein ubiquitination. Scaffold subunit of some HBO1 complexes, which have a histone H4 acetyltransferase activity. Acts as an E3 ubiquitin-protein ligase mediating the ubiquitination and subsequent proteasomal degradation of target protein histone demethylase KDM1A. Also acts as a ubiquitin ligase E3 toward itself. Positive regulator of neurogenesis. The chain is E3 ubiquitin-protein ligase Jade-2 (JADE2) from Homo sapiens (Human).